Here is a 947-residue protein sequence, read N- to C-terminus: DNA topoisomerase 1 (947 aa).

One can recognise a Toprim domain in the interval 16 to 140; the sequence is RRLVIVESPT…VKRMVFHEIT (125 aa). Residues Glu22 and Asp109 each coordinate Mg(2+). A Topo IA-type catalytic domain is found at 155-614; the sequence is DIDLVDAQET…FYFGGNHGVS (460 aa). The interaction with DNA stretch occupies residues 189-194; the sequence is SAGRVQ. Catalysis depends on Tyr343, which acts as the O-(5'-phospho-DNA)-tyrosine intermediate. 3 disordered regions span residues 733–771, 846–888, and 910–947; these read VLPK…GSLL, KRAG…GETN, and ADRR…QSPR. Over residues 915–934 the composition is skewed to basic residues; the sequence is RGPVKRPAKKARKVPAKKAA.

The protein belongs to the type IA topoisomerase family. Monomer. Requires Mg(2+) as cofactor.

It carries out the reaction ATP-independent breakage of single-stranded DNA, followed by passage and rejoining.. Releases the supercoiling and torsional tension of DNA, which is introduced during the DNA replication and transcription, by transiently cleaving and rejoining one strand of the DNA duplex. Introduces a single-strand break via transesterification at a target site in duplex DNA. The scissile phosphodiester is attacked by the catalytic tyrosine of the enzyme, resulting in the formation of a DNA-(5'-phosphotyrosyl)-enzyme intermediate and the expulsion of a 3'-OH DNA strand. The free DNA strand then undergoes passage around the unbroken strand, thus removing DNA supercoils. Finally, in the religation step, the DNA 3'-OH attacks the covalent intermediate to expel the active-site tyrosine and restore the DNA phosphodiester backbone. This Mycobacterium leprae (strain TN) protein is DNA topoisomerase 1.